Consider the following 314-residue polypeptide: Ribosomal RNA small subunit methyltransferase H (314 aa).

S-adenosyl-L-methionine-binding positions include 36-38, Asp-56, Phe-83, Asp-104, and Gln-111; that span reads AGH.

Belongs to the methyltransferase superfamily. RsmH family.

Its subcellular location is the cytoplasm. It catalyses the reaction cytidine(1402) in 16S rRNA + S-adenosyl-L-methionine = N(4)-methylcytidine(1402) in 16S rRNA + S-adenosyl-L-homocysteine + H(+). In terms of biological role, specifically methylates the N4 position of cytidine in position 1402 (C1402) of 16S rRNA. The sequence is that of Ribosomal RNA small subunit methyltransferase H from Brevibacillus brevis (strain 47 / JCM 6285 / NBRC 100599).